A 196-amino-acid chain; its full sequence is Orotate phosphoribosyltransferase (196 aa).

Residue 117 to 125 participates in 5-phospho-alpha-D-ribose 1-diphosphate binding; sequence EDIVTTGLS. Thr-121 and Arg-149 together coordinate orotate.

The protein belongs to the purine/pyrimidine phosphoribosyltransferase family. PyrE subfamily. As to quaternary structure, homodimer. It depends on Mg(2+) as a cofactor.

It catalyses the reaction orotidine 5'-phosphate + diphosphate = orotate + 5-phospho-alpha-D-ribose 1-diphosphate. The protein operates within pyrimidine metabolism; UMP biosynthesis via de novo pathway; UMP from orotate: step 1/2. Its function is as follows. Catalyzes the transfer of a ribosyl phosphate group from 5-phosphoribose 1-diphosphate to orotate, leading to the formation of orotidine monophosphate (OMP). The chain is Orotate phosphoribosyltransferase from Methylobacterium sp. (strain 4-46).